An 886-amino-acid polypeptide reads, in one-letter code: Alanine--tRNA ligase (886 aa).

Residues H568, H572, C670, and H674 each contribute to the Zn(2+) site.

Belongs to the class-II aminoacyl-tRNA synthetase family. It depends on Zn(2+) as a cofactor.

Its subcellular location is the cytoplasm. It carries out the reaction tRNA(Ala) + L-alanine + ATP = L-alanyl-tRNA(Ala) + AMP + diphosphate. Catalyzes the attachment of alanine to tRNA(Ala) in a two-step reaction: alanine is first activated by ATP to form Ala-AMP and then transferred to the acceptor end of tRNA(Ala). Also edits incorrectly charged Ser-tRNA(Ala) and Gly-tRNA(Ala) via its editing domain. The chain is Alanine--tRNA ligase from Prochlorococcus marinus (strain NATL1A).